The chain runs to 417 residues: Queuine tRNA-ribosyltransferase accessory subunit 2 (417 aa).

4 residues coordinate Zn(2+): cysteine 324, cysteine 326, cysteine 329, and histidine 355.

This sequence belongs to the queuine tRNA-ribosyltransferase family. QTRT2 subfamily. Heterodimer of a catalytic subunit and an accessory subunit. Zn(2+) serves as cofactor.

It localises to the cytoplasm. In terms of biological role, non-catalytic subunit of the queuine tRNA-ribosyltransferase (TGT) that catalyzes the base-exchange of a guanine (G) residue with queuine (Q) at position 34 (anticodon wobble position) in tRNAs with GU(N) anticodons (tRNA-Asp, -Asn, -His and -Tyr), resulting in the hypermodified nucleoside queuosine (7-(((4,5-cis-dihydroxy-2-cyclopenten-1-yl)amino)methyl)-7-deazaguanosine). The chain is Queuine tRNA-ribosyltransferase accessory subunit 2 from Drosophila persimilis (Fruit fly).